The sequence spans 122 residues: Holo-[acyl-carrier-protein] synthase (122 aa).

Mg(2+) is bound by residues Asp9 and Glu58.

This sequence belongs to the P-Pant transferase superfamily. AcpS family. It depends on Mg(2+) as a cofactor.

The protein localises to the cytoplasm. The enzyme catalyses apo-[ACP] + CoA = holo-[ACP] + adenosine 3',5'-bisphosphate + H(+). Functionally, transfers the 4'-phosphopantetheine moiety from coenzyme A to a Ser of acyl-carrier-protein. The protein is Holo-[acyl-carrier-protein] synthase of Chlamydia pneumoniae (Chlamydophila pneumoniae).